The chain runs to 462 residues: Keratin, type I cytoskeletal 28 (462 aa).

The interval 1-26 is disordered; the sequence is MSLRFSGGSRHVGIQSGSLRPPSGGA. Residues 1 to 83 are head; that stretch reads MSLRFSGGSR…GSEGGLLSGN (83 aa). Positions 84-119 are coil 1A; the sequence is EKVTMQNLNNRLASYLDNVKALEEANSELERKIKTW. In terms of domain architecture, IF rod spans 84–399; it reads EKVTMQNLNN…RLIDGDENSC (316 aa). Positions 120–141 are linker 1; the sequence is HEKYGPGSCRGLDRDYSKYHLT. The interval 142–233 is coil 1B; the sequence is IEDLKSKIIS…KNHEEEMKVL (92 aa). The segment at 234 to 256 is linker 12; that stretch reads QCAAGGNVNVEMNAAPGVDLTVL. The tract at residues 257-395 is coil 2; the sequence is LNNMRAEYEA…ETYCRLIDGD (139 aa). The segment at 396–462 is tail; the sequence is ENSCSVSKGF…NGKAEQRVPF (67 aa).

Belongs to the intermediate filament family. In terms of assembly, heterotetramer of two type I and two type II keratins. In the hair follicle and bulb, uniformly expressed in all three layers of the inner root sheath (the Henle layer, the Huxley layer and the cuticle) and observed in matrix cells (at protein level).

The protein resides in the cytoplasm. Functionally, essential for the proper assembly of types I and II keratin protein complexes and the formation of keratin intermediate filaments in the inner root sheath (irs). The sequence is that of Keratin, type I cytoskeletal 28 from Mus musculus (Mouse).